A 151-amino-acid chain; its full sequence is Dehydrin Rab16D (151 aa).

Residues 1-138 (MEYQGQHGGH…TADAGGEKKG (138 aa)) form a disordered region. Positions 39–51 (EPAREDKKTDGVL) are enriched in basic and acidic residues. Low complexity-rich tracts occupy residues 90 to 105 (GNNQQQQQEHTTTTTG) and 117 to 132 (IATGAHGGTAATTADA).

The protein belongs to the plant dehydrin family.

In Oryza sativa subsp. indica (Rice), this protein is Dehydrin Rab16D (RAB16D).